The chain runs to 784 residues: DNA repair and recombination protein RAD54-like (784 aa).

A disordered region spans residues 1 to 54; the sequence is MRRSLAPSQRGPMRPESRHSFTPPLLKKNKRSCQQELEREQELDRKRQSALRDA. Positions 2–9 are required for chromatin remodeling, strand pairing activities and coupling of ATPase activity; the sequence is RRSLAPSQ. Serine 20 carries the phosphoserine modification. Threonine 22 is subject to Phosphothreonine. The span at 36 to 47 shows a compositional bias: basic and acidic residues; the sequence is ELEREQELDRKR. The Helicase ATP-binding domain occupies 172–346; sequence EGKRGNFNGC…YSLVNFVNPE (175 aa). 185–192 serves as a coordination point for ATP; that stretch reads DEMGLGKT. A DEGH box motif is present at residues 297-300; it reads DEGH. One can recognise a Helicase C-terminal domain in the interval 503–660; it reads LLDFMLAAIR…NNESAEKHFT (158 aa). Positions 751–784 are disordered; sequence EEAASEQPEEKPDRRKRPSTPPSDDSADEDFLGF. Residues 775–784 are compositionally biased toward acidic residues; it reads DSADEDFLGF.

It belongs to the SNF2/RAD54 helicase family. Interacts (via N-terminus) with spn-A/Rad51.

Its subcellular location is the nucleus. Functionally, involved in mitotic DNA repair and meiotic recombination. Functions in the recombinational DNA repair pathway. Essential for interhomolog gene conversion (GC), but may have a less important role in intersister GC than spn-A/Rad51. In the presence of DNA, spn-A/Rad51 enhances the ATPase activity of okr/Rad54. This is DNA repair and recombination protein RAD54-like from Drosophila yakuba (Fruit fly).